The chain runs to 431 residues: Gamma-glutamyl phosphate reductase (431 aa).

It belongs to the gamma-glutamyl phosphate reductase family.

It is found in the cytoplasm. The enzyme catalyses L-glutamate 5-semialdehyde + phosphate + NADP(+) = L-glutamyl 5-phosphate + NADPH + H(+). It functions in the pathway amino-acid biosynthesis; L-proline biosynthesis; L-glutamate 5-semialdehyde from L-glutamate: step 2/2. Catalyzes the NADPH-dependent reduction of L-glutamate 5-phosphate into L-glutamate 5-semialdehyde and phosphate. The product spontaneously undergoes cyclization to form 1-pyrroline-5-carboxylate. In Methylobacterium sp. (strain 4-46), this protein is Gamma-glutamyl phosphate reductase.